We begin with the raw amino-acid sequence, 176 residues long: NAD(P)H-quinone oxidoreductase subunit 6, chloroplastic (176 aa).

5 consecutive transmembrane segments (helical) span residues 10 to 30 (FLLV…VLLT), 32 to 52 (PIYS…FYIL), 61 to 81 (AQLL…VMFM), 92 to 112 (LWTV…VSLM), and 152 to 172 (FFLP…GAIA).

It belongs to the complex I subunit 6 family. In terms of assembly, NDH is composed of at least 16 different subunits, 5 of which are encoded in the nucleus.

Its subcellular location is the plastid. It localises to the chloroplast thylakoid membrane. It catalyses the reaction a plastoquinone + NADH + (n+1) H(+)(in) = a plastoquinol + NAD(+) + n H(+)(out). The catalysed reaction is a plastoquinone + NADPH + (n+1) H(+)(in) = a plastoquinol + NADP(+) + n H(+)(out). NDH shuttles electrons from NAD(P)H:plastoquinone, via FMN and iron-sulfur (Fe-S) centers, to quinones in the photosynthetic chain and possibly in a chloroplast respiratory chain. The immediate electron acceptor for the enzyme in this species is believed to be plastoquinone. Couples the redox reaction to proton translocation, and thus conserves the redox energy in a proton gradient. This is NAD(P)H-quinone oxidoreductase subunit 6, chloroplastic (ndhG) from Eucalyptus globulus subsp. globulus (Tasmanian blue gum).